A 282-amino-acid chain; its full sequence is Phosphate import ATP-binding protein PstB (282 aa).

The segment at 1–33 (MNMAETQLNPIARPTAPAGFDPAQSGQSQAPSR) is disordered. Positions 36 to 277 (IEINDLNFFY…PVRKETEDYI (242 aa)) constitute an ABC transporter domain. An ATP-binding site is contributed by 68–75 (GPSGCGKS).

Belongs to the ABC transporter superfamily. Phosphate importer (TC 3.A.1.7) family. As to quaternary structure, the complex is composed of two ATP-binding proteins (PstB), two transmembrane proteins (PstC and PstA) and a solute-binding protein (PstS).

It localises to the cell inner membrane. The catalysed reaction is phosphate(out) + ATP + H2O = ADP + 2 phosphate(in) + H(+). Part of the ABC transporter complex PstSACB involved in phosphate import. Responsible for energy coupling to the transport system. This is Phosphate import ATP-binding protein PstB from Paraburkholderia xenovorans (strain LB400).